The primary structure comprises 425 residues: Serine--tRNA ligase (425 aa).

Position 230-232 (230-232 (TAE)) interacts with L-serine. 261–263 (RSE) lines the ATP pocket. Glu-284 provides a ligand contact to L-serine. 348-351 (EISS) provides a ligand contact to ATP. Residue Ser-384 participates in L-serine binding.

Belongs to the class-II aminoacyl-tRNA synthetase family. Type-1 seryl-tRNA synthetase subfamily. In terms of assembly, homodimer. The tRNA molecule binds across the dimer.

It localises to the cytoplasm. The catalysed reaction is tRNA(Ser) + L-serine + ATP = L-seryl-tRNA(Ser) + AMP + diphosphate + H(+). It catalyses the reaction tRNA(Sec) + L-serine + ATP = L-seryl-tRNA(Sec) + AMP + diphosphate + H(+). It functions in the pathway aminoacyl-tRNA biosynthesis; selenocysteinyl-tRNA(Sec) biosynthesis; L-seryl-tRNA(Sec) from L-serine and tRNA(Sec): step 1/1. Catalyzes the attachment of serine to tRNA(Ser). Is also able to aminoacylate tRNA(Sec) with serine, to form the misacylated tRNA L-seryl-tRNA(Sec), which will be further converted into selenocysteinyl-tRNA(Sec). This chain is Serine--tRNA ligase, found in Streptococcus equi subsp. zooepidemicus (strain MGCS10565).